The chain runs to 236 residues: 1-(5-phosphoribosyl)-5-[(5-phosphoribosylamino)methylideneamino] imidazole-4-carboxamide isomerase (236 aa).

The Proton acceptor role is filled by Asp-8. Asp-129 serves as the catalytic Proton donor.

The protein belongs to the HisA/HisF family.

It localises to the cytoplasm. The catalysed reaction is 1-(5-phospho-beta-D-ribosyl)-5-[(5-phospho-beta-D-ribosylamino)methylideneamino]imidazole-4-carboxamide = 5-[(5-phospho-1-deoxy-D-ribulos-1-ylimino)methylamino]-1-(5-phospho-beta-D-ribosyl)imidazole-4-carboxamide. It participates in amino-acid biosynthesis; L-histidine biosynthesis; L-histidine from 5-phospho-alpha-D-ribose 1-diphosphate: step 4/9. This chain is 1-(5-phosphoribosyl)-5-[(5-phosphoribosylamino)methylideneamino] imidazole-4-carboxamide isomerase, found in Ruminiclostridium cellulolyticum (strain ATCC 35319 / DSM 5812 / JCM 6584 / H10) (Clostridium cellulolyticum).